A 540-amino-acid polypeptide reads, in one-letter code: Putative cysteine ligase BshC (540 aa).

Residues G455 to I491 adopt a coiled-coil conformation.

It belongs to the BshC family.

Its function is as follows. Involved in bacillithiol (BSH) biosynthesis. May catalyze the last step of the pathway, the addition of cysteine to glucosamine malate (GlcN-Mal) to generate BSH. This is Putative cysteine ligase BshC from Desulforamulus reducens (strain ATCC BAA-1160 / DSM 100696 / MI-1) (Desulfotomaculum reducens).